The following is a 279-amino-acid chain: Replication factor A protein 2 (279 aa).

Residues 26-47 (GAGFNEYDQSSQPSVDRQQGAG) form a disordered region. Polar residues predominate over residues 32–46 (YDQSSQPSVDRQQGA). A DNA-binding region (OB) is located at residues 80–140 (VTFVGVLRNI…GNIKIFSGKI (61 aa)).

Belongs to the replication factor A protein 2 family. In terms of assembly, heterotrimer of 68, 30, and 12 kDa chains. Post-translationally, phosphorylated in a cell cycle-dependent manner. Hypophosphorylated in G1, becomes phosphorylated at the G1/S boundary, it is maintained in this state through the M phase.

Its subcellular location is the nucleus. Binds to single-stranded sequences. The chain is Replication factor A protein 2 (ssb2) from Schizosaccharomyces pombe (strain 972 / ATCC 24843) (Fission yeast).